We begin with the raw amino-acid sequence, 303 residues long: AP2-like ethylene-responsive transcription factor At1g79700 (303 aa).

The span at 1–10 (MAKVSGRSKK) shows a compositional bias: basic residues. The tract at residues 1-55 (MAKVSGRSKKTIVDDEISDKTASASESASIALTSKRKRKSPPRNAPLQRSSPYRG) is disordered. Residues 20–32 (KTASASESASIAL) are compositionally biased toward polar residues. 2 DNA-binding regions (AP2/ERF) span residues 52–118 (PYRG…LNFP) and 154–202 (KYRG…TNFD). The disordered stretch occupies residues 212–259 (AADKADSDSKPIRSPSREPESSDDNKSPKSEEVIEPSTSPEVIPTRRS). Positions 214–243 (DKADSDSKPIRSPSREPESSDDNKSPKSEE) are enriched in basic and acidic residues.

This sequence belongs to the AP2/ERF transcription factor family. AP2 subfamily.

It is found in the nucleus. Functionally, probably acts as a transcriptional activator. Binds to the GCC-box pathogenesis-related promoter element. May be involved in the regulation of gene expression by stress factors and by components of stress signal transduction pathways. This Arabidopsis thaliana (Mouse-ear cress) protein is AP2-like ethylene-responsive transcription factor At1g79700.